Reading from the N-terminus, the 750-residue chain is Photosystem I P700 chlorophyll a apoprotein A1 (750 aa).

Transmembrane regions (helical) follow at residues 72–95 (VFSAHFGQLAVIFIWLSGMYFHGA), 158–181 (LYTTAIGGLIAAGLMFFAGWFHYH), 197–221 (MNHHLAGLLGLGSLSWAGHQIHVSL), 293–311 (TVHHHVAIAVLFIVAGHMY), 348–371 (WHAQLGLNLALMGSLSIIVAHHMY), 387–413 (LSLFTHHMWIGGFCIVGGAAHAAIFMV), 435–457 (AIISHLNWVCIFLGFHSFGLYIH), and 532–550 (FLVHHIHAFTIHVTVLILL). Residues Cys574 and Cys583 each coordinate [4Fe-4S] cluster. The next 2 membrane-spanning stretches (helical) occupy residues 590 to 611 (HVFLGLFWMYNCLSIVIFHFSW) and 664 to 686 (LSAYGLMFLGAHFVWAFSLMFLF). A chlorophyll a'-binding site is contributed by His675. Positions 683 and 691 each coordinate chlorophyll a. Trp692 lines the phylloquinone pocket. The helical transmembrane segment at 724 to 744 (AVGVAHYLLGGIATTWAFFLA) threads the bilayer.

It belongs to the PsaA/PsaB family. In terms of assembly, the PsaA/B heterodimer binds the P700 chlorophyll special pair and subsequent electron acceptors. PSI consists of a core antenna complex that captures photons, and an electron transfer chain that converts photonic excitation into a charge separation. The eukaryotic PSI reaction center is composed of at least 11 subunits. P700 is a chlorophyll a/chlorophyll a' dimer, A0 is one or more chlorophyll a, A1 is one or both phylloquinones and FX is a shared 4Fe-4S iron-sulfur center. serves as cofactor.

It localises to the plastid. The protein localises to the chloroplast thylakoid membrane. It catalyses the reaction reduced [plastocyanin] + hnu + oxidized [2Fe-2S]-[ferredoxin] = oxidized [plastocyanin] + reduced [2Fe-2S]-[ferredoxin]. In terms of biological role, psaA and PsaB bind P700, the primary electron donor of photosystem I (PSI), as well as the electron acceptors A0, A1 and FX. PSI is a plastocyanin-ferredoxin oxidoreductase, converting photonic excitation into a charge separation, which transfers an electron from the donor P700 chlorophyll pair to the spectroscopically characterized acceptors A0, A1, FX, FA and FB in turn. Oxidized P700 is reduced on the lumenal side of the thylakoid membrane by plastocyanin. The polypeptide is Photosystem I P700 chlorophyll a apoprotein A1 (Mesostigma viride (Green alga)).